Consider the following 191-residue polypeptide: Ribonuclease HII (191 aa).

Residues isoleucine 16 to leucine 191 form the RNase H type-2 domain. Aspartate 22, glutamate 23, and aspartate 110 together coordinate a divalent metal cation.

This sequence belongs to the RNase HII family. Mn(2+) serves as cofactor. Mg(2+) is required as a cofactor.

The protein resides in the cytoplasm. The catalysed reaction is Endonucleolytic cleavage to 5'-phosphomonoester.. Functionally, endonuclease that specifically degrades the RNA of RNA-DNA hybrids. The sequence is that of Ribonuclease HII from Campylobacter jejuni subsp. doylei (strain ATCC BAA-1458 / RM4099 / 269.97).